Reading from the N-terminus, the 257-residue chain is Imidazole glycerol phosphate synthase subunit HisF (257 aa).

Residues Asp11 and Asp130 contribute to the active site.

The protein belongs to the HisA/HisF family. Heterodimer of HisH and HisF.

The protein resides in the cytoplasm. It catalyses the reaction 5-[(5-phospho-1-deoxy-D-ribulos-1-ylimino)methylamino]-1-(5-phospho-beta-D-ribosyl)imidazole-4-carboxamide + L-glutamine = D-erythro-1-(imidazol-4-yl)glycerol 3-phosphate + 5-amino-1-(5-phospho-beta-D-ribosyl)imidazole-4-carboxamide + L-glutamate + H(+). It functions in the pathway amino-acid biosynthesis; L-histidine biosynthesis; L-histidine from 5-phospho-alpha-D-ribose 1-diphosphate: step 5/9. IGPS catalyzes the conversion of PRFAR and glutamine to IGP, AICAR and glutamate. The HisF subunit catalyzes the cyclization activity that produces IGP and AICAR from PRFAR using the ammonia provided by the HisH subunit. In Shewanella sediminis (strain HAW-EB3), this protein is Imidazole glycerol phosphate synthase subunit HisF.